The sequence spans 280 residues: Shikimate dehydrogenase (NADP(+)) (280 aa).

Shikimate contacts are provided by residues 15-17 (SLS) and threonine 62. The active-site Proton acceptor is the lysine 66. Asparagine 88 and aspartate 104 together coordinate shikimate. NADP(+) is bound by residues 128-132 (GAGGA), 151-156 (NRTEGR), and isoleucine 222. A shikimate-binding site is contributed by tyrosine 224. Glycine 245 serves as a coordination point for NADP(+).

The protein belongs to the shikimate dehydrogenase family. In terms of assembly, homodimer.

It catalyses the reaction shikimate + NADP(+) = 3-dehydroshikimate + NADPH + H(+). It participates in metabolic intermediate biosynthesis; chorismate biosynthesis; chorismate from D-erythrose 4-phosphate and phosphoenolpyruvate: step 4/7. Functionally, involved in the biosynthesis of the chorismate, which leads to the biosynthesis of aromatic amino acids. Catalyzes the reversible NADPH linked reduction of 3-dehydroshikimate (DHSA) to yield shikimate (SA). In Methanosarcina barkeri (strain Fusaro / DSM 804), this protein is Shikimate dehydrogenase (NADP(+)).